A 604-amino-acid polypeptide reads, in one-letter code: Putative JmjC domain-containing protein L887 (604 aa).

One can recognise a JmjC domain in the interval 1–127 (MNNMKKIIII…PNNKLNLIQP (127 aa)). Residues 4-24 (MKKIIIISIIIIIIIVLLFYI) form a helical membrane-spanning segment.

Its subcellular location is the membrane. The polypeptide is Putative JmjC domain-containing protein L887 (Acanthamoeba polyphaga (Amoeba)).